Here is a 290-residue protein sequence, read N- to C-terminus: D-tagatose-1,6-bisphosphate aldolase subunit KbaY (290 aa).

Asp-82 functions as the Proton donor in the catalytic mechanism. Residues His-83 and His-180 each contribute to the Zn(2+) site. Gly-181 provides a ligand contact to dihydroxyacetone phosphate. His-208 lines the Zn(2+) pocket. Residues 209-211 (GAS) and 230-233 (NVAT) contribute to the dihydroxyacetone phosphate site.

The protein belongs to the class II fructose-bisphosphate aldolase family. TagBP aldolase KbaY subfamily. As to quaternary structure, homotetramer. Forms a complex with KbaZ. Zn(2+) serves as cofactor.

It carries out the reaction D-tagatofuranose 1,6-bisphosphate = D-glyceraldehyde 3-phosphate + dihydroxyacetone phosphate. Its pathway is carbohydrate metabolism; D-tagatose 6-phosphate degradation; D-glyceraldehyde 3-phosphate and glycerone phosphate from D-tagatose 6-phosphate: step 2/2. In terms of biological role, catalytic subunit of the tagatose-1,6-bisphosphate aldolase KbaYZ, which catalyzes the reversible aldol condensation of dihydroxyacetone phosphate (DHAP or glycerone-phosphate) with glyceraldehyde 3-phosphate (G3P) to produce tagatose 1,6-bisphosphate (TBP). Requires KbaZ subunit for full activity and stability. This chain is D-tagatose-1,6-bisphosphate aldolase subunit KbaY, found in Citrobacter koseri (strain ATCC BAA-895 / CDC 4225-83 / SGSC4696).